The primary structure comprises 198 residues: Carnitine operon protein CaiE (198 aa).

The interval 179 to 198 is disordered; that stretch reads VEENRPRLKGTTDVKPKSAQ. Over residues 180–198 the composition is skewed to basic and acidic residues; sequence EENRPRLKGTTDVKPKSAQ.

It belongs to the transferase hexapeptide repeat family.

It functions in the pathway amine and polyamine metabolism; carnitine metabolism. Functionally, overproduction of CaiE stimulates the activity of CaiB and CaiD. This Salmonella agona (strain SL483) protein is Carnitine operon protein CaiE.